Consider the following 241-residue polypeptide: Eukaryotic translation initiation factor 6 (241 aa).

Belongs to the eIF-6 family. In terms of assembly, monomer. Associates with the 60S ribosomal subunit.

The protein localises to the cytoplasm. The protein resides in the nucleus. It is found in the nucleolus. In terms of biological role, binds to the 60S ribosomal subunit and prevents its association with the 40S ribosomal subunit to form the 80S initiation complex in the cytoplasm. Is also involved in ribosome biogenesis. Associates with pre-60S subunits in the nucleus and is involved in its nuclear export. This Encephalitozoon cuniculi (strain GB-M1) (Microsporidian parasite) protein is Eukaryotic translation initiation factor 6.